Reading from the N-terminus, the 169-residue chain is Small ribosomal subunit protein uS5c (169 aa).

Positions 17–80 (WQERVVQIRR…ADGKKHVVEV (64 aa)) constitute an S5 DRBM domain.

This sequence belongs to the universal ribosomal protein uS5 family. In terms of assembly, part of the 30S ribosomal subunit. Contacts protein S4.

Its subcellular location is the plastid. It is found in the cyanelle. In terms of biological role, with S4 and S12 plays an important role in translational accuracy. This Cyanophora paradoxa protein is Small ribosomal subunit protein uS5c (rps5).